The chain runs to 95 residues: Protein TusB (95 aa).

Belongs to the DsrH/TusB family. Heterohexamer, formed by a dimer of trimers. The hexameric TusBCD complex contains 2 copies each of TusB, TusC and TusD. The TusBCD complex interacts with TusE.

The protein localises to the cytoplasm. Functionally, part of a sulfur-relay system required for 2-thiolation of 5-methylaminomethyl-2-thiouridine (mnm(5)s(2)U) at tRNA wobble positions. The polypeptide is Protein TusB (Klebsiella pneumoniae subsp. pneumoniae (strain ATCC 700721 / MGH 78578)).